The chain runs to 425 residues: Phosphomethylpyrimidine synthase (425 aa).

Substrate is bound by residues Asn-66, Met-95, Tyr-124, His-159, 181 to 183, 222 to 225, and Glu-261; these read SRG and DAYR. Zn(2+) is bound at residue His-265. Tyr-288 contributes to the substrate binding site. His-329 serves as a coordination point for Zn(2+). 3 residues coordinate [4Fe-4S] cluster: Cys-406, Cys-409, and Cys-413.

This sequence belongs to the ThiC family. Requires [4Fe-4S] cluster as cofactor.

It catalyses the reaction 5-amino-1-(5-phospho-beta-D-ribosyl)imidazole + S-adenosyl-L-methionine = 4-amino-2-methyl-5-(phosphooxymethyl)pyrimidine + CO + 5'-deoxyadenosine + formate + L-methionine + 3 H(+). It functions in the pathway cofactor biosynthesis; thiamine diphosphate biosynthesis. Its function is as follows. Catalyzes the synthesis of the hydroxymethylpyrimidine phosphate (HMP-P) moiety of thiamine from aminoimidazole ribotide (AIR) in a radical S-adenosyl-L-methionine (SAM)-dependent reaction. In Archaeoglobus fulgidus (strain ATCC 49558 / DSM 4304 / JCM 9628 / NBRC 100126 / VC-16), this protein is Phosphomethylpyrimidine synthase.